The sequence spans 345 residues: Anthranilate phosphoribosyltransferase (345 aa).

5-phospho-alpha-D-ribose 1-diphosphate contacts are provided by residues Gly84, 87–88 (GD), Thr92, 94–97 (NIST), 112–120 (KHGNRSVSS), and Ser124. An anthranilate-binding site is contributed by Gly84. Ser96 contacts Mg(2+). Asn115 contacts anthranilate. Arg170 is a binding site for anthranilate. Residues Asp229 and Glu230 each contribute to the Mg(2+) site.

The protein belongs to the anthranilate phosphoribosyltransferase family. In terms of assembly, homodimer. The cofactor is Mg(2+).

The catalysed reaction is N-(5-phospho-beta-D-ribosyl)anthranilate + diphosphate = 5-phospho-alpha-D-ribose 1-diphosphate + anthranilate. It functions in the pathway amino-acid biosynthesis; L-tryptophan biosynthesis; L-tryptophan from chorismate: step 2/5. In terms of biological role, catalyzes the transfer of the phosphoribosyl group of 5-phosphorylribose-1-pyrophosphate (PRPP) to anthranilate to yield N-(5'-phosphoribosyl)-anthranilate (PRA). This is Anthranilate phosphoribosyltransferase from Xanthomonas campestris pv. campestris (strain B100).